Consider the following 354-residue polypeptide: Probable L-ascorbate-6-phosphate lactonase UlaG (354 aa).

It belongs to the UlaG family. It depends on a divalent metal cation as a cofactor.

The protein resides in the cytoplasm. It carries out the reaction L-ascorbate 6-phosphate + H2O = 3-dehydro-L-gulonate 6-phosphate. It functions in the pathway cofactor degradation; L-ascorbate degradation; D-xylulose 5-phosphate from L-ascorbate: step 1/4. Functionally, probably catalyzes the hydrolysis of L-ascorbate-6-P into 3-keto-L-gulonate-6-P. Is essential for L-ascorbate utilization under anaerobic conditions. This chain is Probable L-ascorbate-6-phosphate lactonase UlaG, found in Escherichia fergusonii (strain ATCC 35469 / DSM 13698 / CCUG 18766 / IAM 14443 / JCM 21226 / LMG 7866 / NBRC 102419 / NCTC 12128 / CDC 0568-73).